A 166-amino-acid polypeptide reads, in one-letter code: Large ribosomal subunit protein uL10 (166 aa).

The protein belongs to the universal ribosomal protein uL10 family. In terms of assembly, part of the ribosomal stalk of the 50S ribosomal subunit. The N-terminus interacts with L11 and the large rRNA to form the base of the stalk. The C-terminus forms an elongated spine to which L12 dimers bind in a sequential fashion forming a multimeric L10(L12)X complex.

Forms part of the ribosomal stalk, playing a central role in the interaction of the ribosome with GTP-bound translation factors. This Shewanella woodyi (strain ATCC 51908 / MS32) protein is Large ribosomal subunit protein uL10.